Consider the following 291-residue polypeptide: 4-diphosphocytidyl-2-C-methyl-D-erythritol kinase (291 aa).

The active site involves lysine 10. 99 to 109 (PMGGGLGGGSS) provides a ligand contact to ATP. The active site involves aspartate 141.

It belongs to the GHMP kinase family. IspE subfamily. As to quaternary structure, homodimer.

The catalysed reaction is 4-CDP-2-C-methyl-D-erythritol + ATP = 4-CDP-2-C-methyl-D-erythritol 2-phosphate + ADP + H(+). It participates in isoprenoid biosynthesis; isopentenyl diphosphate biosynthesis via DXP pathway; isopentenyl diphosphate from 1-deoxy-D-xylulose 5-phosphate: step 3/6. Catalyzes the phosphorylation of the position 2 hydroxy group of 4-diphosphocytidyl-2C-methyl-D-erythritol. In Photorhabdus laumondii subsp. laumondii (strain DSM 15139 / CIP 105565 / TT01) (Photorhabdus luminescens subsp. laumondii), this protein is 4-diphosphocytidyl-2-C-methyl-D-erythritol kinase.